The sequence spans 148 residues: Cell division protein SepF (148 aa).

The interval 1–59 is disordered; the sequence is MNNKFKDFFGFGDNDSYEERDAYEEHYDEQEEMQNSNRPTNSRDSNVVSIKAGQAGSGP. The segment covering 33-48 has biased composition (polar residues); the sequence is MQNSNRPTNSRDSNVV.

Belongs to the SepF family. As to quaternary structure, homodimer. Interacts with FtsZ.

It is found in the cytoplasm. Cell division protein that is part of the divisome complex and is recruited early to the Z-ring. Probably stimulates Z-ring formation, perhaps through the cross-linking of FtsZ protofilaments. Its function overlaps with FtsA. This Lactobacillus delbrueckii subsp. bulgaricus (strain ATCC BAA-365 / Lb-18) protein is Cell division protein SepF.